The chain runs to 383 residues: Deoxyguanosinetriphosphate triphosphohydrolase-like protein (383 aa).

Positions 62-198 (RLTHSLEVST…ASLADDISYI (137 aa)) constitute an HD domain.

This sequence belongs to the dGTPase family. Type 2 subfamily.

The polypeptide is Deoxyguanosinetriphosphate triphosphohydrolase-like protein (Rickettsia prowazekii (strain Madrid E)).